The following is a 221-amino-acid chain: U1 small nuclear ribonucleoprotein C (221 aa).

The segment at 4-36 adopts a Matrin-type zinc-finger fold; sequence HYCDYCDVFLTHDSVSVRKAHNSGRNHLQNVRE. A disordered region spans residues 80-221; the sequence is GAGPLSGSSD…PHSRTGYGPR (142 aa). The span at 142-158 shows a compositional bias: pro residues; it reads YSRPPPQGGPYSRPPPD. Residues 178–190 show a composition bias toward low complexity; it reads PLGYGAPLPGAYP. Residues 191 to 204 show a composition bias toward pro residues; it reads SGPPPNMRGPPPPL.

The protein belongs to the U1 small nuclear ribonucleoprotein C family. As to quaternary structure, U1 snRNP is composed of the 7 core Sm proteins B/B', D1, D2, D3, E, F and G that assemble in a heptameric protein ring on the Sm site of the small nuclear RNA to form the core snRNP, and at least 3 U1 snRNP-specific proteins U1-70K, U1-A and U1-C. U1-C interacts with U1 snRNA and the 5' splice-site region of the pre-mRNA.

It localises to the nucleus. Component of the spliceosomal U1 snRNP, which is essential for recognition of the pre-mRNA 5' splice-site and the subsequent assembly of the spliceosome. U1-C is directly involved in initial 5' splice-site recognition for both constitutive and regulated alternative splicing. The interaction with the 5' splice-site seems to precede base-pairing between the pre-mRNA and the U1 snRNA. Stimulates commitment or early (E) complex formation by stabilizing the base pairing of the 5' end of the U1 snRNA and the 5' splice-site region. This is U1 small nuclear ribonucleoprotein C from Mycosarcoma maydis (Corn smut fungus).